Here is a 357-residue protein sequence, read N- to C-terminus: MAIQSDSLSSLPDSPRIVAPQPVSPNEESIERALRPKALEEYVGQQRAREQLEIFIAAARKRGEALDHVLLFGPPGLGKTTLAHIIAHEMGVQLRQTSGPVLERPGDLAALLTNLERNDVLFIDEIHRLSPVVEEILYPALEDFQIDILIGEGPAARSVKLDLQPFTLVGATTRAGMLTNPLRDRFGIVSRLEFYNTDELARIVTRSASLLNADITADGAHEVARRSRGTPRIANRLLRRVRDYAQVKAHGVIDQDAAGRALAMLDVDPQGLDVMDRKLLEAIVHKFDGGPVGVDSLAAAIGEERDTIEDVIEPYLIQHGYLQRTPRGRTATLTTWRHLGLNPPAAASGGTGELFSK.

Over residues 1-15 (MAIQSDSLSSLPDSP) the composition is skewed to low complexity. The disordered stretch occupies residues 1-30 (MAIQSDSLSSLPDSPRIVAPQPVSPNEESI). Residues 13 to 195 (DSPRIVAPQP…FGIVSRLEFY (183 aa)) form a large ATPase domain (RuvB-L) region. Residues L34, R35, G76, K79, T80, T81, 142–144 (EDF), R185, Y195, and R232 contribute to the ATP site. Residue T80 participates in Mg(2+) binding. Positions 196-266 (NTDELARIVT…AAGRALAMLD (71 aa)) are small ATPAse domain (RuvB-S). Residues 269 to 357 (PQGLDVMDRK…SGGTGELFSK (89 aa)) form a head domain (RuvB-H) region. The DNA site is built by R305, R324, and R329.

Belongs to the RuvB family. Homohexamer. Forms an RuvA(8)-RuvB(12)-Holliday junction (HJ) complex. HJ DNA is sandwiched between 2 RuvA tetramers; dsDNA enters through RuvA and exits via RuvB. An RuvB hexamer assembles on each DNA strand where it exits the tetramer. Each RuvB hexamer is contacted by two RuvA subunits (via domain III) on 2 adjacent RuvB subunits; this complex drives branch migration. In the full resolvosome a probable DNA-RuvA(4)-RuvB(12)-RuvC(2) complex forms which resolves the HJ.

The protein localises to the cytoplasm. The catalysed reaction is ATP + H2O = ADP + phosphate + H(+). The RuvA-RuvB-RuvC complex processes Holliday junction (HJ) DNA during genetic recombination and DNA repair, while the RuvA-RuvB complex plays an important role in the rescue of blocked DNA replication forks via replication fork reversal (RFR). RuvA specifically binds to HJ cruciform DNA, conferring on it an open structure. The RuvB hexamer acts as an ATP-dependent pump, pulling dsDNA into and through the RuvAB complex. RuvB forms 2 homohexamers on either side of HJ DNA bound by 1 or 2 RuvA tetramers; 4 subunits per hexamer contact DNA at a time. Coordinated motions by a converter formed by DNA-disengaged RuvB subunits stimulates ATP hydrolysis and nucleotide exchange. Immobilization of the converter enables RuvB to convert the ATP-contained energy into a lever motion, pulling 2 nucleotides of DNA out of the RuvA tetramer per ATP hydrolyzed, thus driving DNA branch migration. The RuvB motors rotate together with the DNA substrate, which together with the progressing nucleotide cycle form the mechanistic basis for DNA recombination by continuous HJ branch migration. Branch migration allows RuvC to scan DNA until it finds its consensus sequence, where it cleaves and resolves cruciform DNA. The chain is Holliday junction branch migration complex subunit RuvB from Bordetella parapertussis (strain 12822 / ATCC BAA-587 / NCTC 13253).